Consider the following 439-residue polypeptide: U1 small nuclear ribonucleoprotein 70 kDa (439 aa).

T2 carries the post-translational modification N-acetylthreonine. Residues 48-79 form a disordered region; that stretch reads FEDPRDAPPPTRAETREERMERKRREKIERRQ. Positions 60–79 are enriched in basic and acidic residues; it reads AETREERMERKRREKIERRQ. Residues 92 to 202 form a required for interaction with U1 RNA region; the sequence is HNDPNAQGDA…GGGLGGTRRG (111 aa). Positions 103-181 constitute an RRM domain; the sequence is KTLFVARVNY…RRVLVDVERG (79 aa). Position 118 is an N6-acetyllysine (K118). A Phosphotyrosine modification is found at Y126. The segment at 187-439 is disordered; the sequence is WRPRRLGGGL…NGYLMEAAPE (253 aa). The span at 192 to 201 shows a compositional bias: gly residues; sequence LGGGLGGTRR. The segment covering 207 to 254 has biased composition (basic and acidic residues); sequence NIRHSGRDDTSRYDERPGPSPLPHRDRDRDRERERRERSRERDKERER. Residues S226 and S268 each carry the phosphoserine modification. Residues 255–268 show a composition bias toward basic residues; it reads RRSRSRDRRRRSRS. Composition is skewed to basic and acidic residues over residues 269–286 and 294–310; these read RDKE…DKDR and RSRE…EELR. The residue at position 323 (S323) is a Phosphoserine. The span at 346–394 shows a compositional bias: basic and acidic residues; it reads PEEKGRDRDRDRRRSHRSERERRRDRDRDRDREHKRGERGGDRGRDEAR. Residue K349 forms a Glycyl lysine isopeptide (Lys-Gly) (interchain with G-Cter in SUMO2) linkage. The span at 395–410 shows a compositional bias: gly residues; it reads GGGGGGQDNGLEGLGN.

Component of the U1 snRNP. The U1 snRNP is composed of the U1 snRNA and the 7 core Sm proteins SNRPB, SNRPD1, SNRPD2, SNRPD3, SNRPE, SNRPF and SNRPG that assemble in a heptameric protein ring on the Sm site of the small nuclear RNA to form the core snRNP, and at least three U1 snRNP-specific proteins SNRNP70/U1-70K, SNRPA/U1-A and SNRPC/U1-C. Interacts with SCNM1. Found in a pre-mRNA splicing complex with SFRS4, SFRS5, SNRNP70, SNRPA1, SRRM1 and SRRM2. Found in a pre-mRNA exonic splicing enhancer (ESE) complex with SNRNP70, SNRPA1, SRRM1 and TRA2B/SFRS10. Interacts with dephosphorylated SFRS13A and SFPQ. Interacts with NUDT21/CPSF5, CPSF6, SCAF11, and ZRANB2. Interacts with GEMIN5. Interacts with FUS. Extensively phosphorylated on serine residues in the C-terminal region.

It is found in the nucleus speckle. The protein localises to the nucleus. It localises to the nucleoplasm. Component of the spliceosomal U1 snRNP, which is essential for recognition of the pre-mRNA 5' splice-site and the subsequent assembly of the spliceosome. SNRNP70 binds to the loop I region of U1-snRNA. This is U1 small nuclear ribonucleoprotein 70 kDa (SNRNP70) from Bos taurus (Bovine).